The primary structure comprises 308 residues: Testis-specific Y-encoded protein 3 (308 aa).

Belongs to the nucleosome assembly protein (NAP) family.

The protein resides in the cytoplasm. The protein localises to the nucleus. In terms of biological role, may be involved in sperm differentiation and proliferation. In Homo sapiens (Human), this protein is Testis-specific Y-encoded protein 3 (TSPY3).